The following is a 178-amino-acid chain: Large ribosomal subunit protein uL13m (178 aa).

Belongs to the universal ribosomal protein uL13 family. As to quaternary structure, component of the mitochondrial ribosome large subunit (39S) which comprises a 16S rRNA and about 50 distinct proteins.

The protein localises to the mitochondrion. The protein is Large ribosomal subunit protein uL13m (mRpL13) of Drosophila melanogaster (Fruit fly).